Reading from the N-terminus, the 802-residue chain is Leucine--tRNA ligase (802 aa).

The 'HIGH' region signature appears at 41 to 52; sequence PYPSGQGLHVGH. A 'KMSKS' region motif is present at residues 580-584; sequence KMSKS. K583 provides a ligand contact to ATP.

The protein belongs to the class-I aminoacyl-tRNA synthetase family.

It is found in the cytoplasm. It catalyses the reaction tRNA(Leu) + L-leucine + ATP = L-leucyl-tRNA(Leu) + AMP + diphosphate. This is Leucine--tRNA ligase from Alkaliphilus oremlandii (strain OhILAs) (Clostridium oremlandii (strain OhILAs)).